The chain runs to 69 residues: uncharacterized protein (69 aa).

A run of 2 helical transmembrane segments spans residues 7–29 (LLSG…LGSI) and 44–66 (ALQV…LGLL).

It localises to the cell membrane. This is an uncharacterized protein from Archaeoglobus fulgidus (strain ATCC 49558 / DSM 4304 / JCM 9628 / NBRC 100126 / VC-16).